A 131-amino-acid polypeptide reads, in one-letter code: Small ribosomal subunit protein uS8 (131 aa).

Belongs to the universal ribosomal protein uS8 family. In terms of assembly, part of the 30S ribosomal subunit. Contacts proteins S5 and S12.

Its function is as follows. One of the primary rRNA binding proteins, it binds directly to 16S rRNA central domain where it helps coordinate assembly of the platform of the 30S subunit. In Pelagibacter ubique (strain HTCC1062), this protein is Small ribosomal subunit protein uS8.